Here is a 345-residue protein sequence, read N- to C-terminus: Protein SHI RELATED SEQUENCE 7 (345 aa).

The interval Leu-7–Ser-28 is disordered. The segment covering Gly-9–Ser-28 has biased composition (basic and acidic residues). Residues Cys-119, Cys-122, Cys-130, Cys-135, Cys-139, and Cys-146 each coordinate Zn(2+). A DNA-binding region (zn(2)-C6 fungal-type; degenerate) is located at residues Cys-119 to Cys-146. The disordered stretch occupies residues Ala-168 to Gly-200. A Required for homo- and heterodimerization motif is present at residues Ile-256–His-259.

Belongs to the SHI protein family. In terms of tissue distribution, mainly expressed in the filaments of flowers, the shoot apex regions and pollen. Also present in leaves.

The protein resides in the nucleus. Transcription activator that binds DNA on 5'-ACTCTAC-3' and promotes auxin homeostasis-regulating gene expression (e.g. YUC genes), as well as genes affecting stamen development, cell expansion and timing of flowering. Synergistically with other SHI-related proteins, regulates gynoecium, stamen and leaf development in a dose-dependent manner, controlling apical-basal patterning. Promotes style and stigma formation, and influences vascular development during gynoecium development. May also have a role in the formation and/or maintenance of the shoot apical meristem (SAM). Regulates anther dehiscence and floral development. The polypeptide is Protein SHI RELATED SEQUENCE 7 (SRS7) (Arabidopsis thaliana (Mouse-ear cress)).